A 222-amino-acid polypeptide reads, in one-letter code: Small ribosomal subunit protein eS1 (222 aa).

Belongs to the eukaryotic ribosomal protein eS1 family.

This is Small ribosomal subunit protein eS1 from Pyrobaculum islandicum (strain DSM 4184 / JCM 9189 / GEO3).